A 420-amino-acid polypeptide reads, in one-letter code: Ribulose bisphosphate carboxylase large chain (420 aa).

Positions 103 and 153 each coordinate substrate. The active-site Proton acceptor is the lysine 155. Lysine 157 contacts substrate. Mg(2+) contacts are provided by lysine 181, aspartate 183, and glutamate 184. Residue lysine 181 is modified to N6-carboxylysine. Histidine 274 serves as the catalytic Proton acceptor. Substrate contacts are provided by arginine 275, histidine 307, and serine 359.

This sequence belongs to the RuBisCO large chain family. Type I subfamily. As to quaternary structure, heterohexadecamer of 8 large chains and 8 small chains; disulfide-linked. The disulfide link is formed within the large subunit homodimers. Requires Mg(2+) as cofactor. In terms of processing, the disulfide bond which can form in the large chain dimeric partners within the hexadecamer appears to be associated with oxidative stress and protein turnover.

Its subcellular location is the plastid. It is found in the chloroplast. It catalyses the reaction 2 (2R)-3-phosphoglycerate + 2 H(+) = D-ribulose 1,5-bisphosphate + CO2 + H2O. The catalysed reaction is D-ribulose 1,5-bisphosphate + O2 = 2-phosphoglycolate + (2R)-3-phosphoglycerate + 2 H(+). Its function is as follows. RuBisCO catalyzes two reactions: the carboxylation of D-ribulose 1,5-bisphosphate, the primary event in carbon dioxide fixation, as well as the oxidative fragmentation of the pentose substrate in the photorespiration process. Both reactions occur simultaneously and in competition at the same active site. The chain is Ribulose bisphosphate carboxylase large chain from Anemia mexicana (Mexican fern).